Consider the following 32-residue polypeptide: Glutathione S-transferase 8.2 (32 aa).

Residue 21–22 (QS) participates in glutathione binding.

This sequence belongs to the GST superfamily. Alpha family. As to quaternary structure, homodimer. The N-terminus is blocked.

It localises to the cytoplasm. It catalyses the reaction RX + glutathione = an S-substituted glutathione + a halide anion + H(+). Functionally, conjugation of reduced glutathione to a wide number of exogenous and endogenous hydrophobic electrophiles. This Dicentrarchus labrax (European seabass) protein is Glutathione S-transferase 8.2.